The sequence spans 381 residues: Protein RecA (381 aa).

79–86 (GPESSGKT) serves as a coordination point for ATP.

The protein belongs to the RecA family.

It is found in the cytoplasm. Its function is as follows. Can catalyze the hydrolysis of ATP in the presence of single-stranded DNA, the ATP-dependent uptake of single-stranded DNA by duplex DNA, and the ATP-dependent hybridization of homologous single-stranded DNAs. It interacts with LexA causing its activation and leading to its autocatalytic cleavage. In Streptococcus parasanguinis, this protein is Protein RecA.